Here is an 84-residue protein sequence, read N- to C-terminus: Small ribosomal subunit protein uS17 (84 aa).

The protein belongs to the universal ribosomal protein uS17 family. In terms of assembly, part of the 30S ribosomal subunit.

Functionally, one of the primary rRNA binding proteins, it binds specifically to the 5'-end of 16S ribosomal RNA. This is Small ribosomal subunit protein uS17 from Clostridium botulinum (strain Alaska E43 / Type E3).